A 430-amino-acid polypeptide reads, in one-letter code: Adenylosuccinate synthetase (430 aa).

GTP is bound by residues 13 to 19 and 41 to 43; these read GDEGKGK and GHT. The active-site Proton acceptor is Asp-14. Residues Asp-14 and Gly-41 each coordinate Mg(2+). IMP contacts are provided by residues 14–17, 39–42, Thr-130, Arg-144, Gln-225, Thr-240, and Arg-304; these read DEGK and NAGH. His-42 functions as the Proton donor in the catalytic mechanism. Residue 300 to 306 participates in substrate binding; it reads ASTGRPR. GTP-binding positions include Arg-306, 332-334, and 414-416; these read KLD and STG.

It belongs to the adenylosuccinate synthetase family. In terms of assembly, homodimer. It depends on Mg(2+) as a cofactor.

The protein resides in the cytoplasm. It catalyses the reaction IMP + L-aspartate + GTP = N(6)-(1,2-dicarboxyethyl)-AMP + GDP + phosphate + 2 H(+). It functions in the pathway purine metabolism; AMP biosynthesis via de novo pathway; AMP from IMP: step 1/2. Functionally, plays an important role in the de novo pathway of purine nucleotide biosynthesis. Catalyzes the first committed step in the biosynthesis of AMP from IMP. The polypeptide is Adenylosuccinate synthetase (Xylella fastidiosa (strain 9a5c)).